A 134-amino-acid polypeptide reads, in one-letter code: UPF0412 protein YaaI (134 aa).

A signal peptide spans 1–23 (MRSVLTISVGLLFGLALSSVAHA).

The protein belongs to the UPF0412 family.

The sequence is that of UPF0412 protein YaaI from Salmonella typhimurium (strain LT2 / SGSC1412 / ATCC 700720).